Reading from the N-terminus, the 255-residue chain is Menaquinone reductase, iron-sulfur cluster-binding subunit (255 aa).

4Fe-4S ferredoxin-type domains follow at residues 11-41 (WGMV…PQPD), 66-97 (HDVA…KNEE), and 99-128 (GIVS…FNWF). 12 residues coordinate [4Fe-4S] cluster: C20, C23, C26, C30, C75, C78, C83, C87, C108, C111, C114, and C118. The [3Fe-4S] cluster site is built by C155, C158, C188, and C192.

As to quaternary structure, the Qrc complex is composed of four subunits: QrcA, QrcB, QrcC and QrcD. Can form a supercomplex with the [NiFe] hydrogenase HynA1 and the tetraheme Type I cytochrome c3 TpIc(3), its physiological electron donors. It depends on [4Fe-4S] cluster as a cofactor. Requires [3Fe-4S] cluster as cofactor.

Its subcellular location is the periplasm. Its function is as follows. Component of the respiratory Qrc complex, that catalyzes the reduction of the menaquinone pool using electrons transferred from the reduced periplasmic cytochrome c3, and which is probably involved in sulfate respiration. Is likely essential for growth on H(2) or formate since the periplasmic hydrogenases and/or formate dehydrogenases act as primary electron donors for the Qrc complex. QrcC is an electron-transferring subunit; its cubane iron sulfur clusters form a pathway for electron transfer between the hemes of QrcA and the membrane quinone pool. The chain is Menaquinone reductase, iron-sulfur cluster-binding subunit from Nitratidesulfovibrio vulgaris (strain ATCC 29579 / DSM 644 / CCUG 34227 / NCIMB 8303 / VKM B-1760 / Hildenborough) (Desulfovibrio vulgaris).